Reading from the N-terminus, the 369-residue chain is MLMKTTAVHAPASQGTSGIVLDSLRVAYHGNVVLKPLSLTIEPGEVLALIGPSGSGKTTVLRAVAGFVQPAGGRILIGDTDVTHLPPYKRGLAMVVQNYALFPHLKVEDNVAFGLRAQKQPKALINERVTQALKTVGMSDYAARYPHQLSGGQQQRVAIARAIAVRPRVLLLDEPLSALDAQIRHNMVEELARLHRELPELTILYVTHDQTEALTLADKIGIMKDGSLIAHGETRALYQHPPNRFASEFLGRANILSAIALGITEAPGLVHVSCGGAVIRAFSRGSHHGYNKLLCIRPQHLSLTPRSAYSNRFNATLQSVHWQGDLTHLLCDVAGETVRMVLTHVNPLPRVGDKLALWFEPDDAVLIEV.

Positions 19-250 (IVLDSLRVAY…PPNRFASEFL (232 aa)) constitute an ABC transporter domain. 51–58 (GPSGSGKT) is a binding site for ATP.

The protein belongs to the ABC transporter superfamily. 2-aminoethylphosphonate importer (TC 3.A.1.11.5) family.

It localises to the cell inner membrane. Its function is as follows. Probably part of the PhnSTUV complex (TC 3.A.1.11.5) involved in 2-aminoethylphosphonate import. Probably responsible for energy coupling to the transport system. The sequence is that of Putative 2-aminoethylphosphonate import ATP-binding protein PhnT (phnT) from Salmonella choleraesuis (strain SC-B67).